Reading from the N-terminus, the 162-residue chain is MRRAVCPGSFDPITNGHLDIVIRASKLFDEVVVAVSINKNKATLFTIDERMELIREAVRNHPMAPSNVVVDASHGLVVDFCRARGIQSIVKGLRAVSDFDYELQMAQMNNSLAGVETLFMSTNPQYAFLSSSLVKEVARYGGDVSHLVPDVVLKQLRERAVE.

Residue S9 coordinates substrate. ATP-binding positions include 9 to 10 and H17; that span reads SF. Positions 41, 77, and 91 each coordinate substrate. Residues 92–94, E102, and 126–132 each bind ATP; these read GLR and YAFLSSS.

The protein belongs to the bacterial CoaD family. In terms of assembly, homohexamer. Requires Mg(2+) as cofactor.

The protein localises to the cytoplasm. It catalyses the reaction (R)-4'-phosphopantetheine + ATP + H(+) = 3'-dephospho-CoA + diphosphate. Its pathway is cofactor biosynthesis; coenzyme A biosynthesis; CoA from (R)-pantothenate: step 4/5. Reversibly transfers an adenylyl group from ATP to 4'-phosphopantetheine, yielding dephospho-CoA (dPCoA) and pyrophosphate. The protein is Phosphopantetheine adenylyltransferase of Frankia alni (strain DSM 45986 / CECT 9034 / ACN14a).